A 525-amino-acid chain; its full sequence is Bifunctional pantoate ligase/cytidylate kinase (525 aa).

The tract at residues 1-292 (MDNVPIIRTV…VGSARLIDNM (292 aa)) is pantoate--beta-alanine ligase. 44–51 (MGALHAGH) contributes to the ATP binding site. Residue His-51 is the Proton donor of the active site. Gln-75 contributes to the (R)-pantoate binding site. Gln-75 contributes to the beta-alanine binding site. Residue 162-165 (GQKD) coordinates ATP. Gln-168 is a binding site for (R)-pantoate. ATP contacts are provided by residues Ile-191 and 199 to 202 (LSSR). A cytidylate kinase region spans residues 293–525 (LLDARLPILA…LYQERFPDRA (233 aa)).

It in the N-terminal section; belongs to the pantothenate synthetase family. This sequence in the C-terminal section; belongs to the cytidylate kinase family. Type 1 subfamily.

It is found in the cytoplasm. The catalysed reaction is (R)-pantoate + beta-alanine + ATP = (R)-pantothenate + AMP + diphosphate + H(+). It catalyses the reaction CMP + ATP = CDP + ADP. It carries out the reaction dCMP + ATP = dCDP + ADP. It functions in the pathway cofactor biosynthesis; (R)-pantothenate biosynthesis; (R)-pantothenate from (R)-pantoate and beta-alanine: step 1/1. Catalyzes the condensation of pantoate with beta-alanine in an ATP-dependent reaction via a pantoyl-adenylate intermediate. Functionally, catalyzes the transfer of a phosphate group from ATP to either CMP or dCMP to form CDP or dCDP and ADP, respectively. This chain is Bifunctional pantoate ligase/cytidylate kinase, found in Acaryochloris marina (strain MBIC 11017).